The chain runs to 172 residues: Shikimate kinase (172 aa).

Position 11–16 (11–16 (ASGKTE)) interacts with ATP. Mg(2+) is bound at residue threonine 15. Substrate is bound by residues aspartate 33, arginine 57, and glycine 80. Arginine 120 serves as a coordination point for ATP. Arginine 142 contributes to the substrate binding site.

It belongs to the shikimate kinase family. In terms of assembly, monomer. Requires Mg(2+) as cofactor.

Its subcellular location is the cytoplasm. The catalysed reaction is shikimate + ATP = 3-phosphoshikimate + ADP + H(+). It functions in the pathway metabolic intermediate biosynthesis; chorismate biosynthesis; chorismate from D-erythrose 4-phosphate and phosphoenolpyruvate: step 5/7. Functionally, catalyzes the specific phosphorylation of the 3-hydroxyl group of shikimic acid using ATP as a cosubstrate. In Flavobacterium psychrophilum (strain ATCC 49511 / DSM 21280 / CIP 103535 / JIP02/86), this protein is Shikimate kinase.